The sequence spans 226 residues: ATP synthase F(0) complex subunit a (226 aa).

The next 6 membrane-spanning stretches (helical) occupy residues 13–33 (VILGIPLIAIAMLDPFTLISW), 69–89 (WALLLTSLMLLLMSLNLLGLL), 97–117 (TQLSLNMGLAVPLWLATVIMA), 138–158 (IPVLIIIETISLFIRPLALGV), 179–199 (FVLLSIMPTVAILTSIVLFLL), and 201–221 (LLEIAVAMIQAYVFVLLLSLY).

Belongs to the ATPase A chain family. Component of the ATP synthase complex composed at least of ATP5F1A/subunit alpha, ATP5F1B/subunit beta, ATP5MC1/subunit c (homooctomer), MT-ATP6/subunit a, MT-ATP8/subunit 8, ATP5ME/subunit e, ATP5MF/subunit f, ATP5MG/subunit g, ATP5MK/subunit k, ATP5MJ/subunit j, ATP5F1C/subunit gamma, ATP5F1D/subunit delta, ATP5F1E/subunit epsilon, ATP5PF/subunit F6, ATP5PB/subunit b, ATP5PD/subunit d, ATP5PO/subunit OSCP. ATP synthase complex consists of a soluble F(1) head domain (subunits alpha(3) and beta(3)) - the catalytic core - and a membrane F(0) domain - the membrane proton channel (subunits c, a, 8, e, f, g, k and j). These two domains are linked by a central stalk (subunits gamma, delta, and epsilon) rotating inside the F1 region and a stationary peripheral stalk (subunits F6, b, d, and OSCP). Interacts with DNAJC30; interaction is direct.

The protein resides in the mitochondrion inner membrane. The enzyme catalyses H(+)(in) = H(+)(out). In terms of biological role, subunit a, of the mitochondrial membrane ATP synthase complex (F(1)F(0) ATP synthase or Complex V) that produces ATP from ADP in the presence of a proton gradient across the membrane which is generated by electron transport complexes of the respiratory chain. ATP synthase complex consist of a soluble F(1) head domain - the catalytic core - and a membrane F(1) domain - the membrane proton channel. These two domains are linked by a central stalk rotating inside the F(1) region and a stationary peripheral stalk. During catalysis, ATP synthesis in the catalytic domain of F(1) is coupled via a rotary mechanism of the central stalk subunits to proton translocation. With the subunit c (ATP5MC1), forms the proton-conducting channel in the F(0) domain, that contains two crucial half-channels (inlet and outlet) that facilitate proton movement from the mitochondrial intermembrane space (IMS) into the matrix. Protons are taken up via the inlet half-channel and released through the outlet half-channel, following a Grotthuss mechanism. In Xenopus laevis (African clawed frog), this protein is ATP synthase F(0) complex subunit a.